A 729-amino-acid chain; its full sequence is Catalase-peroxidase (729 aa).

The tryptophyl-tyrosyl-methioninium (Trp-Tyr) (with M-243) cross-link spans 95-217 (WHSAGTYRIT…LAAVQMGLIY (123 aa)). H96 serves as the catalytic Proton acceptor. The segment at residues 217 to 243 (YVNPEGPNGKPDPIAAATDIRETFFRM) is a cross-link (tryptophyl-tyrosyl-methioninium (Tyr-Met) (with W-95)). H258 provides a ligand contact to heme b.

Belongs to the peroxidase family. Peroxidase/catalase subfamily. In terms of assembly, homodimer or homotetramer. The cofactor is heme b. Formation of the three residue Trp-Tyr-Met cross-link is important for the catalase, but not the peroxidase activity of the enzyme.

The enzyme catalyses H2O2 + AH2 = A + 2 H2O. It carries out the reaction 2 H2O2 = O2 + 2 H2O. Bifunctional enzyme with both catalase and broad-spectrum peroxidase activity. The sequence is that of Catalase-peroxidase from Nitrobacter hamburgensis (strain DSM 10229 / NCIMB 13809 / X14).